The chain runs to 201 residues: Putative lipoprotein Hmuk_2215 (201 aa).

Positions 1–22 are cleaved as a signal peptide; that stretch reads MCPRPRRAVLLGLGVAMSAIAG. Cys-23 carries the N-acetylcysteine modification. Residue Cys-23 is the site of S-archaeol cysteine attachment. Disordered stretches follow at residues 25-78 and 182-201; these read ETAP…ETSE and ATRA…GDCP. Residues 69–78 show a composition bias toward basic and acidic residues; the sequence is TRADETETSE.

The protein localises to the cell membrane. This chain is Putative lipoprotein Hmuk_2215, found in Halomicrobium mukohataei (strain ATCC 700874 / DSM 12286 / JCM 9738 / NCIMB 13541) (Haloarcula mukohataei).